Consider the following 455-residue polypeptide: Venom prothrombin activator nigrarin-D (455 aa).

A signal peptide spans 1–20 (MAPPLLLCLILTFLWNLPEA). A propeptide spanning residues 21–40 (ESNVFLKSKVANRFLQRTKR) is cleaved from the precursor. The Gla domain occupies 41–86 (SNSIFEEFKAGNIERECIEEKCSKEEAREVFEDNEKTETFWNVYVD). Glu46, Glu47, Glu54, Glu56, Glu59, Glu60, Glu65, Glu66, Glu69, Glu72, and Glu75 each carry 4-carboxyglutamate. An intrachain disulfide couples Cys57 to Cys62. Residues 86 to 122 (DGDQCSSNPCHYRGTCKDGIGSYTCTCLPNYEGKNCE) form the EGF-like 1; calcium-binding domain. 11 disulfides stabilise this stretch: Cys90/Cys101, Cys95/Cys110, Cys112/Cys121, Cys129/Cys140, Cys136/Cys149, Cys151/Cys164, Cys172/Cys328, Cys216/Cys221, Cys236/Cys252, Cys376/Cys390, and Cys401/Cys429. An O-linked (Hex...) serine glycan is attached at Ser92. Residues 129-164 (CRVFNGNCWHFCKSVQNEIQCSCAESYRLGDDGHSC) enclose the EGF-like 2 domain. A propeptide spans 182–209 (REASLPDFVQSQKAILLKKSDNPSPDIR) (activation peptide). Residues 210-453 (IINGMDCKLG…FIPWIKAIMS (244 aa)) enclose the Peptidase S1 domain. Residue His251 is the Charge relay system of the active site. Asn254 carries an N-linked (GlcNAc...) asparagine glycan. Asp308 acts as the Charge relay system in catalysis. Ser405 serves as the catalytic Charge relay system.

This sequence belongs to the peptidase S1 family. Snake venom subfamily. In terms of assembly, heterodimer of a light chain and a heavy chain; disulfide-linked. Post-translationally, the vitamin K-dependent, enzymatic carboxylation of some glutamate residues allows the modified protein to bind calcium. As to expression, expressed by the venom gland.

It is found in the secreted. The catalysed reaction is Selective cleavage of Arg-|-Thr and then Arg-|-Ile bonds in prothrombin to form thrombin.. Functionally, snake prothrombin activator that attacks the hemostatic system of prey. This protein is functionally similar to blood coagulation factor Xa. In Cryptophis nigrescens (Eastern small-eyed snake), this protein is Venom prothrombin activator nigrarin-D.